The chain runs to 276 residues: Large ribosomal subunit protein uL2c (276 aa).

Disordered stretches follow at residues 1–51 and 224–276; these read MAIR…GIIT and VVMN…RRRK. Polar residues-rich tracts occupy residues 7 to 18 and 27 to 37; these read RTYTPSTRNRPI and SNPQKKLTSGQ.

It belongs to the universal ribosomal protein uL2 family. As to quaternary structure, part of the 50S ribosomal subunit.

The protein localises to the plastid. Its subcellular location is the chloroplast. This is Large ribosomal subunit protein uL2c (rpl2) from Cycas taitungensis (Prince sago).